The primary structure comprises 540 residues: IQ motif and ankyrin repeat domain-containing protein 1 (540 aa).

Over residues 1-17 the composition is skewed to low complexity; it reads MSTKKGGPKAASGKGQA. The segment at 1–62 is disordered; that stretch reads MSTKKGGPKA…PQAPAAPTAE (62 aa). The 30-residue stretch at 62–91 folds into the IQ domain; that stretch reads EDKAAIVIQCAFRQYLARRELARRCQERQE. 2 ANK repeats span residues 191-220 and 224-253; these read HGNTPLSEAAAGGQTMAIQLLAELGANPNT and FGRTPLYRAAFGGHLEAVEELLKIGADPRM. A coiled-coil region spans residues 281–388; the sequence is LTEAMLKNME…EETLAMARLE (108 aa).

This Mus musculus (Mouse) protein is IQ motif and ankyrin repeat domain-containing protein 1.